Consider the following 207-residue polypeptide: uncharacterized protein (207 aa).

Disordered stretches follow at residues 1–81 and 140–169; these read MNPT…GNTR and TSQSIDAQPTPSQHPLAHHEPHEKRGPPKK. A compositionally biased stretch (polar residues) spans 21–40; that stretch reads FEQTNSSASLTQKNSSSETE. Residues 58-70 are compositionally biased toward basic residues; the sequence is PTKRGSGRGRGRS. A compositionally biased stretch (polar residues) spans 140 to 152; it reads TSQSIDAQPTPSQ. Residues 156–165 are compositionally biased toward basic and acidic residues; that stretch reads AHHEPHEKRG.

It localises to the nucleus. Its subcellular location is the nucleolus. This is an uncharacterized protein from Schizosaccharomyces pombe (strain 972 / ATCC 24843) (Fission yeast).